The primary structure comprises 372 residues: Alanine dehydrogenase 2 (372 aa).

Residue His-95 is part of the active site. 169 to 199 lines the NAD(+) pocket; that stretch reads KVTIIGGGQAGTNAAKIALGLGADVTILDVN.

This sequence belongs to the AlaDH/PNT family.

It carries out the reaction L-alanine + NAD(+) + H2O = pyruvate + NH4(+) + NADH + H(+). Its pathway is amino-acid degradation; L-alanine degradation via dehydrogenase pathway; NH(3) and pyruvate from L-alanine: step 1/1. In terms of biological role, may play a role in cell wall synthesis as L-alanine is an important constituent of the peptidoglycan layer. The polypeptide is Alanine dehydrogenase 2 (ald2) (Staphylococcus aureus (strain N315)).